A 431-amino-acid polypeptide reads, in one-letter code: Tol-Pal system protein TolB (431 aa).

The first 26 residues, 1–26 (MSLMTKLGFRALVASCLITAGSAANA), serve as a signal peptide directing secretion. Positions 411–431 (PQILSVQGGSVREPSWGPFMQ) are disordered.

The protein belongs to the TolB family. As to quaternary structure, the Tol-Pal system is composed of five core proteins: the inner membrane proteins TolA, TolQ and TolR, the periplasmic protein TolB and the outer membrane protein Pal. They form a network linking the inner and outer membranes and the peptidoglycan layer.

The protein resides in the periplasm. In terms of biological role, part of the Tol-Pal system, which plays a role in outer membrane invagination during cell division and is important for maintaining outer membrane integrity. The sequence is that of Tol-Pal system protein TolB from Burkholderia lata (strain ATCC 17760 / DSM 23089 / LMG 22485 / NCIMB 9086 / R18194 / 383).